The primary structure comprises 572 residues: Proline--tRNA ligase (572 aa).

It belongs to the class-II aminoacyl-tRNA synthetase family. ProS type 1 subfamily. In terms of assembly, homodimer.

The protein resides in the cytoplasm. The enzyme catalyses tRNA(Pro) + L-proline + ATP = L-prolyl-tRNA(Pro) + AMP + diphosphate. Its function is as follows. Catalyzes the attachment of proline to tRNA(Pro) in a two-step reaction: proline is first activated by ATP to form Pro-AMP and then transferred to the acceptor end of tRNA(Pro). As ProRS can inadvertently accommodate and process non-cognate amino acids such as alanine and cysteine, to avoid such errors it has two additional distinct editing activities against alanine. One activity is designated as 'pretransfer' editing and involves the tRNA(Pro)-independent hydrolysis of activated Ala-AMP. The other activity is designated 'posttransfer' editing and involves deacylation of mischarged Ala-tRNA(Pro). The misacylated Cys-tRNA(Pro) is not edited by ProRS. In Leuconostoc mesenteroides subsp. mesenteroides (strain ATCC 8293 / DSM 20343 / BCRC 11652 / CCM 1803 / JCM 6124 / NCDO 523 / NBRC 100496 / NCIMB 8023 / NCTC 12954 / NRRL B-1118 / 37Y), this protein is Proline--tRNA ligase.